A 1254-amino-acid chain; its full sequence is AF4/FMR2 family member 3 (1254 aa).

The span at 45–62 (YEPDRNALRRKERERRSQ) shows a compositional bias: basic and acidic residues. Disordered stretches follow at residues 45–90 (YEPD…GDEL), 139–190 (AESR…AAQQ), 261–324 (RPMD…GENN), 350–534 (EPSK…EGQD), and 552–752 (KTTC…SVGS). 2 stretches are compositionally biased toward polar residues: residues 67 to 76 (DSGSFNSGYS) and 143 to 158 (AQPQPSTVCSTASSTP). Positions 359 to 369 (KDSQLVSSGHS) are enriched in polar residues. Low complexity predominate over residues 406–418 (QQAAQRTALRALA). Polar residues predominate over residues 421 to 433 (SVVQQTNCRGSAP). The segment covering 441–472 (SSSSGGSSSSSDSESTSGSDSETESSSSSSES) has biased composition (low complexity). Residues 552-561 (KTTCKEEQRP) are compositionally biased toward basic and acidic residues. A compositionally biased stretch (low complexity) spans 577–605 (SPPAAVAVTAAALPPAVPSAPTESAPAPT). Basic and acidic residues predominate over residues 615 to 633 (RRTERTSAGDGANCHRPEE). Low complexity-rich tracts occupy residues 694–704 (TESSSSSSSSD) and 732–749 (AASSNNNSNSNSSTSRAS). Ser-782 carries the post-translational modification Phosphoserine. The segment at 813 to 883 (PGVLSAPSAK…ASTNNTLSGN (71 aa)) is disordered. Basic and acidic residues predominate over residues 857 to 869 (REIKKVQGRKESA). Positions 873-883 (AASTNNTLSGN) are enriched in polar residues. Phosphoserine is present on Ser-908. 2 disordered regions span residues 919 to 991 (ASED…HRDC) and 1128 to 1171 (AAQA…SGLS). Polar residues-rich tracts occupy residues 922–941 (DLTSSSRPHGNGLLTSASSN) and 960–985 (ASHNSSENGTLHSKSRPQTEPWSPGS). Low complexity-rich tracts occupy residues 1132-1146 (PSPWGSSGKSTGSPS) and 1154-1171 (PASSVGSQGSLSSSSGLS).

Belongs to the AF4 family. In terms of tissue distribution, highest levels found in lymphoid tissues, lower levels in brain and lung.

Its subcellular location is the nucleus. Putative transcription activator that may function in lymphoid development and oncogenesis. This Mus musculus (Mouse) protein is AF4/FMR2 family member 3 (Aff3).